The chain runs to 88 residues: Large ribosomal subunit protein bL31B (88 aa).

Belongs to the bacterial ribosomal protein bL31 family. Type B subfamily. As to quaternary structure, part of the 50S ribosomal subunit.

In Paraburkholderia phytofirmans (strain DSM 17436 / LMG 22146 / PsJN) (Burkholderia phytofirmans), this protein is Large ribosomal subunit protein bL31B.